The following is a 430-amino-acid chain: Glutamate-1-semialdehyde 2,1-aminomutase (430 aa).

An N6-(pyridoxal phosphate)lysine modification is found at Lys265.

It belongs to the class-III pyridoxal-phosphate-dependent aminotransferase family. HemL subfamily. As to quaternary structure, homodimer. Pyridoxal 5'-phosphate is required as a cofactor.

Its subcellular location is the cytoplasm. The enzyme catalyses (S)-4-amino-5-oxopentanoate = 5-aminolevulinate. It functions in the pathway porphyrin-containing compound metabolism; protoporphyrin-IX biosynthesis; 5-aminolevulinate from L-glutamyl-tRNA(Glu): step 2/2. This is Glutamate-1-semialdehyde 2,1-aminomutase from Shewanella oneidensis (strain ATCC 700550 / JCM 31522 / CIP 106686 / LMG 19005 / NCIMB 14063 / MR-1).